We begin with the raw amino-acid sequence, 358 residues long: MSIIDKLSLVEKTYEDIVQKLNDANIKDNRVIQDLMKKKSEIEDIVEEYKKLKVVLKEIEESNEMVNNPDTDKELKDMALLEIEDLNQKKEDIVNGLRLLLLPKDKNDGKNIIVEIRVGTGGDESALFVGDLFRMYTRFIERTNLKMEIIDTSPTELGGYKEVIFSVSGKDAYRTLKFESGTHRVQRIPATESGGRIHTSASTVAVMPEAMESDVVIKDEDIRVDIFRSSGPGGQSVNTTDSAVRITHLPTGLVVQCQDEKSQHKNKAKALKVLRARIYEKEEAERKAKEAKERREQIGSGDRSERIRTYNFPQNRVTDHRINVTLYKLDRFMDGEITEITDALFKKEQEDMLASYSD.

N5-methylglutamine is present on Gln235.

Belongs to the prokaryotic/mitochondrial release factor family. In terms of processing, methylated by PrmC. Methylation increases the termination efficiency of RF1.

The protein resides in the cytoplasm. In terms of biological role, peptide chain release factor 1 directs the termination of translation in response to the peptide chain termination codons UAG and UAA. This is Peptide chain release factor 1 from Brachyspira hyodysenteriae (strain ATCC 49526 / WA1).